Here is a 556-residue protein sequence, read N- to C-terminus: Copine-7 (556 aa).

C2 domains follow at residues 1-128 and 135-262; these read MSGD…TRPL and NAGK…AQWD. D168, D174, D230, D232, and D238 together coordinate Ca(2+). The 200-residue stretch at 305–504 folds into the VWFA domain; the sequence is HCTVAIDFTA…PALRDIVQFV (200 aa). A disordered region spans residues 536–556; it reads KDLPPRSLGGQTGEAGPSSAP.

It belongs to the copine family. Ca(2+) serves as cofactor.

The protein resides in the cytoplasm. It localises to the nucleus. The protein localises to the cell membrane. In terms of biological role, calcium-dependent phospholipid-binding protein that may play a role in calcium-mediated intracellular processes. This Rattus norvegicus (Rat) protein is Copine-7.